Consider the following 364-residue polypeptide: Methylthioribose-1-phosphate isomerase (364 aa).

Asp254 (proton donor) is an active-site residue.

The protein belongs to the eIF-2B alpha/beta/delta subunits family. MtnA subfamily.

It is found in the cytoplasm. The protein resides in the nucleus. It catalyses the reaction 5-(methylsulfanyl)-alpha-D-ribose 1-phosphate = 5-(methylsulfanyl)-D-ribulose 1-phosphate. It functions in the pathway amino-acid biosynthesis; L-methionine biosynthesis via salvage pathway; L-methionine from S-methyl-5-thio-alpha-D-ribose 1-phosphate: step 1/6. Catalyzes the interconversion of methylthioribose-1-phosphate (MTR-1-P) into methylthioribulose-1-phosphate (MTRu-1-P). The polypeptide is Methylthioribose-1-phosphate isomerase (Drosophila simulans (Fruit fly)).